A 633-amino-acid polypeptide reads, in one-letter code: ATP-dependent RNA helicase mss116, mitochondrial (633 aa).

A mitochondrion-targeting transit peptide spans 1 to 32; that stretch reads MKTGRTRPLRVFDILVPPWPPTVPHRIKLPRG. The Q motif signature appears at 38–66; that stretch reads EFYSAITRNWNKLKGLKNCWQIWKDVQEI. One can recognise a Helicase ATP-binding domain in the interval 70–248; that stretch reads IRKYQGESTV…TAEKLSNIQT (179 aa). 83–90 contacts ATP; the sequence is PGNNDGAH. A DEAD box motif is present at residues 195-198; sequence RPLE. The Helicase C-terminal domain occupies 262 to 429; sequence FLADVKRILQ…NVDLVIQVGL (168 aa). Positions 567–633 are disordered; it reads FNYATGNDLN…GGRGGKPRAA (67 aa).

The protein belongs to the DEAD box helicase family. DDX18/HAS1 subfamily.

The protein resides in the mitochondrion matrix. The enzyme catalyses ATP + H2O = ADP + phosphate + H(+). In terms of biological role, ATP-dependent RNA helicase required for mitochondrial splicing of group I and II introns. Also required for efficient mitochondrial translation. This chain is ATP-dependent RNA helicase mss116, mitochondrial (mss116), found in Aspergillus oryzae (strain ATCC 42149 / RIB 40) (Yellow koji mold).